The sequence spans 270 residues: Tryptophan synthase alpha chain (270 aa).

Catalysis depends on proton acceptor residues Glu-49 and Asp-60.

It belongs to the TrpA family. Tetramer of two alpha and two beta chains.

The catalysed reaction is (1S,2R)-1-C-(indol-3-yl)glycerol 3-phosphate + L-serine = D-glyceraldehyde 3-phosphate + L-tryptophan + H2O. It participates in amino-acid biosynthesis; L-tryptophan biosynthesis; L-tryptophan from chorismate: step 5/5. Functionally, the alpha subunit is responsible for the aldol cleavage of indoleglycerol phosphate to indole and glyceraldehyde 3-phosphate. The sequence is that of Tryptophan synthase alpha chain from Buchnera aphidicola subsp. Diuraphis noxia.